The following is a 231-amino-acid chain: Large ribosomal subunit protein uL1 (231 aa).

It belongs to the universal ribosomal protein uL1 family. Part of the 50S ribosomal subunit.

Functionally, binds directly to 23S rRNA. The L1 stalk is quite mobile in the ribosome, and is involved in E site tRNA release. In terms of biological role, protein L1 is also a translational repressor protein, it controls the translation of the L11 operon by binding to its mRNA. The protein is Large ribosomal subunit protein uL1 of Gluconacetobacter diazotrophicus (strain ATCC 49037 / DSM 5601 / CCUG 37298 / CIP 103539 / LMG 7603 / PAl5).